We begin with the raw amino-acid sequence, 156 residues long: MPSVESFELDHTIVKAPYVRHCGKHKIGSDGEVNKFDIRFCQPNKEALKPGVIHTLEHLLAINIRRFSEEYDHFDVIDISPMGCQTGYYLIMSGTPSVEEIIDVLEKTMTYSLSIETVPAATEKECGQAALHDLEGTKEVMRKWLSEDKGSLKQVF.

Residues His54, His58, and Cys126 each coordinate Fe cation.

Belongs to the LuxS family. As to quaternary structure, homodimer. Fe cation serves as cofactor.

It catalyses the reaction S-(5-deoxy-D-ribos-5-yl)-L-homocysteine = (S)-4,5-dihydroxypentane-2,3-dione + L-homocysteine. Involved in the synthesis of autoinducer 2 (AI-2) which is secreted by bacteria and is used to communicate both the cell density and the metabolic potential of the environment. The regulation of gene expression in response to changes in cell density is called quorum sensing. Catalyzes the transformation of S-ribosylhomocysteine (RHC) to homocysteine (HC) and 4,5-dihydroxy-2,3-pentadione (DPD). The protein is S-ribosylhomocysteine lyase of Shouchella clausii (strain KSM-K16) (Alkalihalobacillus clausii).